We begin with the raw amino-acid sequence, 439 residues long: Serine hydroxymethyltransferase (439 aa).

126–128 contributes to the (6S)-5,6,7,8-tetrahydrofolate binding site; it reads AHV. Lysine 232 bears the N6-(pyridoxal phosphate)lysine mark.

This sequence belongs to the SHMT family. In terms of assembly, homodimer. The cofactor is pyridoxal 5'-phosphate.

The protein localises to the cytoplasm. Its pathway is amino-acid biosynthesis; glycine biosynthesis; glycine from L-serine: step 1/1. Catalyzes the reversible interconversion of serine and glycine with a modified folate serving as the one-carbon carrier. Also exhibits a pteridine-independent aldolase activity toward beta-hydroxyamino acids, producing glycine and aldehydes, via a retro-aldol mechanism. This chain is Serine hydroxymethyltransferase, found in Staphylothermus marinus (strain ATCC 43588 / DSM 3639 / JCM 9404 / F1).